The following is a 112-amino-acid chain: Protein ORF1 (112 aa).

The segment covering 1 to 10 (MEGTDWSGWG) has biased composition (low complexity). Residues 1 to 20 (MEGTDWSGWGDDSDFPWPKG) form a disordered region. Residues 51–71 (IAFVILIVSLFVLLLGVLLAC) form a helical membrane-spanning segment.

The protein resides in the host membrane. This chain is Protein ORF1, found in Snake adenovirus serotype 1 (SnAdV-1).